A 95-amino-acid chain; its full sequence is Glutamyl-tRNA(Gln) amidotransferase subunit C (95 aa).

The protein belongs to the GatC family. In terms of assembly, heterotrimer of A, B and C subunits.

It catalyses the reaction L-glutamyl-tRNA(Gln) + L-glutamine + ATP + H2O = L-glutaminyl-tRNA(Gln) + L-glutamate + ADP + phosphate + H(+). It carries out the reaction L-aspartyl-tRNA(Asn) + L-glutamine + ATP + H2O = L-asparaginyl-tRNA(Asn) + L-glutamate + ADP + phosphate + 2 H(+). Its function is as follows. Allows the formation of correctly charged Asn-tRNA(Asn) or Gln-tRNA(Gln) through the transamidation of misacylated Asp-tRNA(Asn) or Glu-tRNA(Gln) in organisms which lack either or both of asparaginyl-tRNA or glutaminyl-tRNA synthetases. The reaction takes place in the presence of glutamine and ATP through an activated phospho-Asp-tRNA(Asn) or phospho-Glu-tRNA(Gln). The sequence is that of Glutamyl-tRNA(Gln) amidotransferase subunit C from Caulobacter vibrioides (strain ATCC 19089 / CIP 103742 / CB 15) (Caulobacter crescentus).